Consider the following 356-residue polypeptide: uncharacterized protein (356 aa).

This is an uncharacterized protein from Acanthamoeba polyphaga (Amoeba).